We begin with the raw amino-acid sequence, 596 residues long: Cis-3-hydroxy-L-proline dehydratase (596 aa).

S67 functions as the Proton acceptor in the catalytic mechanism.

Belongs to the AcnX family. In terms of assembly, monomer. Fe(3+) serves as cofactor.

The enzyme catalyses cis-3-hydroxy-L-proline = 1-pyrroline-2-carboxylate + H2O. Inhibited by Zn(2+). Not inhibited by pyrrole-2-carboxylate nor its derivative 2-thiophenecarboxylate. Catalyzes the dehydration of cis-3-hydroxy-L-proline (c3LHyp) to Delta(1)-pyrroline-2-carboxylate (Pyr2C). No activity with L-proline, trans-4-hydroxy-L-proline (t4LHyp), cis-4-hydroxy-L-proline (c4LHyp), trans-3-hydroxy-L-proline (t3LHyp), D-proline, cis-4-hydroxy-D-proline (c4DHyp), trans-4-hydroxy-D-proline (t4DHyp) or L-serine as substrates. Because of the low catalytic efficiency, C3LHyp is likely not a main physiological substrate of this enzyme in H.jecorina. The polypeptide is Cis-3-hydroxy-L-proline dehydratase (Hypocrea jecorina (strain QM6a) (Trichoderma reesei)).